Here is a 719-residue protein sequence, read N- to C-terminus: MFNKVTKTFQYGQHSVVLETGEMARQASGAVLVSVEDTVVLATVVAAKKAKAGQDFFPLTVDYIEKTYAAGRIPGGFFKREGKPSEKETLTSRLIDRPLRPLFPEGFYNDVQVVIHTLSVNPDIDPDIPAMIGASAALAISGIPFNGPIGAARVGYVDGQYVLNPTATQLKSSKMDLVVAGTENAVLMVESEAKQLSEEIMLGGVVFGHEQMQTAINAIHDLVRDAGKPDWDWQPAPKNEALIAAVSAAAQEGLNAAYQIREKQARTTKLREVYAAVQAAMAEQAAQAGQPAPDSVGVDNILFDLEARIVRSQILNGEPRIDGRDTRTVRPISIRLGVLPRAHGSALFTRGETQALVVATLGTKQDEQIIDALMGEYRDRFMLHYNMPPFATGETGRIGVPKRREIGHGRLAKRALLPLLPAPEDFQYTIRLVSEITESNGSSSMASVCGGSLAMMDAGVPTNDHVAGVAMGLILDSGKFAVLTDILGDEDHLGDMDFKVAGTETGITALQMDIKIQGITKEIMQVALAQAREGRLHILGKMRDALEGSRTELSAFAPRMLTIKINPEKIRDVIGKGGATIRALTEETGTQIDISDDGTIVIASVDETQAKEAQRRIVELTADVEVGQIYDGSVLRLLDFGAIVQVLPGRDGLLHISEIANYRIANINDVLKVGQPVRVKVIEADDKGRLRLSIKAIGGIEQQQSGTAEPAAQSEPQAE.

The Mg(2+) site is built by Asp491 and Asp497. Residues 558–617 enclose the KH domain; that stretch reads PRMLTIKINPEKIRDVIGKGGATIRALTEETGTQIDISDDGTIVIASVDETQAKEAQRRI. Residues 627–695 form the S1 motif domain; that stretch reads GQIYDGSVLR…DKGRLRLSIK (69 aa).

This sequence belongs to the polyribonucleotide nucleotidyltransferase family. Mg(2+) serves as cofactor.

The protein localises to the cytoplasm. The enzyme catalyses RNA(n+1) + phosphate = RNA(n) + a ribonucleoside 5'-diphosphate. Its function is as follows. Involved in mRNA degradation. Catalyzes the phosphorolysis of single-stranded polyribonucleotides processively in the 3'- to 5'-direction. The sequence is that of Polyribonucleotide nucleotidyltransferase from Bordetella bronchiseptica (strain ATCC BAA-588 / NCTC 13252 / RB50) (Alcaligenes bronchisepticus).